A 292-amino-acid polypeptide reads, in one-letter code: Inositol monophosphatase 2 (292 aa).

Glutamate 75, aspartate 94, isoleucine 96, aspartate 97, and aspartate 231 together coordinate Mg(2+). Glutamate 75 contacts substrate. Residues 96-99 (IDGT) and aspartate 231 each bind substrate.

Belongs to the inositol monophosphatase superfamily. The cofactor is Mg(2+).

It catalyses the reaction a myo-inositol phosphate + H2O = myo-inositol + phosphate. The protein operates within polyol metabolism; myo-inositol biosynthesis; myo-inositol from D-glucose 6-phosphate: step 2/2. With respect to regulation, inhibited by Li(+) and Na(+). Its function is as follows. Responsible for the provision of inositol required for synthesis of phosphatidylinositol and polyphosphoinositides and involved in the inositol cycle of calcium signaling. In Saccharomyces cerevisiae (strain ATCC 204508 / S288c) (Baker's yeast), this protein is Inositol monophosphatase 2 (INM2).